The primary structure comprises 432 residues: UDP-N-acetylmuramate--L-alanine ligase (432 aa).

ATP is bound at residue 108-114 (GAHGKTS).

Belongs to the MurCDEF family.

The protein resides in the cytoplasm. The catalysed reaction is UDP-N-acetyl-alpha-D-muramate + L-alanine + ATP = UDP-N-acetyl-alpha-D-muramoyl-L-alanine + ADP + phosphate + H(+). Its pathway is cell wall biogenesis; peptidoglycan biosynthesis. Functionally, cell wall formation. The sequence is that of UDP-N-acetylmuramate--L-alanine ligase from Bacillus velezensis (strain DSM 23117 / BGSC 10A6 / LMG 26770 / FZB42) (Bacillus amyloliquefaciens subsp. plantarum).